The following is a 333-amino-acid chain: Endo-1,4-beta-xylanase (333 aa).

The N-terminal stretch at 1-17 (MYLVAFMLLAILPTGYC) is a signal peptide. The GH10 domain maps to 18–330 (QLNTLAVRAG…KPAYQGIVDG (313 aa)). Glutamate 147 functions as the Proton donor in the catalytic mechanism. The Nucleophile role is filled by glutamate 252.

The protein belongs to the glycosyl hydrolase 10 (cellulase F) family.

The protein resides in the secreted. It catalyses the reaction Endohydrolysis of (1-&gt;4)-beta-D-xylosidic linkages in xylans.. It participates in glycan degradation; xylan degradation. Its function is as follows. Has xylanase activity. Seems to be involved in the release of sugars from the hemicellulolytic fraction in the compost. This Agaricus bisporus (White button mushroom) protein is Endo-1,4-beta-xylanase (xlnA).